Here is a 407-residue protein sequence, read N- to C-terminus: 4-hydroxy-3-methylbut-2-en-1-yl diphosphate synthase (ferredoxin) (407 aa).

C316, C319, C350, and E357 together coordinate [4Fe-4S] cluster.

It belongs to the IspG family. The cofactor is [4Fe-4S] cluster.

The catalysed reaction is (2E)-4-hydroxy-3-methylbut-2-enyl diphosphate + 2 oxidized [2Fe-2S]-[ferredoxin] + H2O = 2-C-methyl-D-erythritol 2,4-cyclic diphosphate + 2 reduced [2Fe-2S]-[ferredoxin] + H(+). Its pathway is isoprenoid biosynthesis; isopentenyl diphosphate biosynthesis via DXP pathway; isopentenyl diphosphate from 1-deoxy-D-xylulose 5-phosphate: step 5/6. In terms of biological role, converts 2C-methyl-D-erythritol 2,4-cyclodiphosphate (ME-2,4cPP) into 1-hydroxy-2-methyl-2-(E)-butenyl 4-diphosphate. The chain is 4-hydroxy-3-methylbut-2-en-1-yl diphosphate synthase (ferredoxin) from Cyanothece sp. (strain PCC 7425 / ATCC 29141).